The primary structure comprises 466 residues: MLYEGYLKYMKAKYGERSQGTYFMAGEDLISKLPDSLITQILLYLPIKDIVRTSSLSSRWKSLWLLIPRLDLDSEEFQDYNAFVGFMNKFIDFSGEEKICLDKLKLSSRKTVNDLPCVTRWIDFVVRRKLKHLDVECLVNRKFLEEMPLSLYVCDTLVNLRLHRVLLGKFEAVSLPCLKTMRLEENVYANDVVLESLISSCPVLKDLIILRMFEDNVKVLRVHSLTLTSLNIDFNFGEGDDFVDGFDKKVSGVLIDAPRLKYLKFQDDLSGSKIITNSGSLAKVNVVYVFNENDCADVVDIPRRNMVRNFLTSISGVSDMKISQHFVEFLYYYKDFDPLPQFCNLSRLKAEISLYFLEILPTILESCPNLKSLVMVLEFYLQEEDEPIIFSSVPRCLVSSLESVEIKKFNGRPAKMEVARYFLENSGVLQKLVLHLRCSTHEDGFYILKDLLALPRGSSTCRIVVC.

The 54-residue stretch at 27-80 (EDLISKLPDSLITQILLYLPIKDIVRTSSLSSRWKSLWLLIPRLDLDSEEFQDY) folds into the F-box domain. The region spanning 385–436 (DEPIIFSSVPRCLVSSLESVEIKKFNGRPAKMEVARYFLENSGVLQKLVLHL) is the FBD domain.

This Arabidopsis thaliana (Mouse-ear cress) protein is FBD-associated F-box protein At5g22730.